A 264-amino-acid chain; its full sequence is Glutamate racemase (264 aa).

Residues 10-11 (DS) and 42-43 (YG) each bind substrate. Residue cysteine 73 is the Proton donor/acceptor of the active site. A substrate-binding site is contributed by 74–75 (NT). Cysteine 181 acts as the Proton donor/acceptor in catalysis. Residue 182–183 (TH) coordinates substrate.

Belongs to the aspartate/glutamate racemases family.

The catalysed reaction is L-glutamate = D-glutamate. Its pathway is cell wall biogenesis; peptidoglycan biosynthesis. Its function is as follows. Provides the (R)-glutamate required for cell wall biosynthesis. This chain is Glutamate racemase, found in Thermoanaerobacter pseudethanolicus (strain ATCC 33223 / 39E) (Clostridium thermohydrosulfuricum).